Reading from the N-terminus, the 341-residue chain is Flap endonuclease 1 (341 aa).

Positions 1–98 are N-domain; the sequence is MGVQIGELIP…RELEKRREAR (98 aa). Positions 27, 80, 152, 154, 173, 175, and 236 each coordinate Mg(2+). Residues 116 to 258 form an I-domain region; it reads EAKKYAMRAT…KALTIVKRTK (143 aa). Residues 330–338 are interaction with PCNA; that stretch reads KQSTLESWF.

This sequence belongs to the XPG/RAD2 endonuclease family. FEN1 subfamily. Interacts with PCNA. PCNA stimulates the nuclease activity without altering cleavage specificity. Requires Mg(2+) as cofactor.

In terms of biological role, structure-specific nuclease with 5'-flap endonuclease and 5'-3' exonuclease activities involved in DNA replication and repair. During DNA replication, cleaves the 5'-overhanging flap structure that is generated by displacement synthesis when DNA polymerase encounters the 5'-end of a downstream Okazaki fragment. Binds the unpaired 3'-DNA end and kinks the DNA to facilitate 5' cleavage specificity. Cleaves one nucleotide into the double-stranded DNA from the junction in flap DNA, leaving a nick for ligation. Also involved in the base excision repair (BER) pathway. Acts as a genome stabilization factor that prevents flaps from equilibrating into structures that lead to duplications and deletions. Also possesses 5'-3' exonuclease activity on nicked or gapped double-stranded DNA. The polypeptide is Flap endonuclease 1 (Thermococcus onnurineus (strain NA1)).